The chain runs to 466 residues: DNA polymerase delta subunit 3 (466 aa).

Ala-2 carries the post-translational modification N-acetylalanine. Disordered stretches follow at residues 169–188 (NNEL…VSQQ) and 199–232 (KAAA…PGKG). The span at 206–217 (ETNKETKTEAKE) shows a compositional bias: basic and acidic residues. Lys-258 participates in a covalent cross-link: Glycyl lysine isopeptide (Lys-Gly) (interchain with G-Cter in SUMO); alternate. Lys-258 is covalently cross-linked (Glycyl lysine isopeptide (Lys-Gly) (interchain with G-Cter in SUMO2); alternate). Residue Lys-261 forms a Glycyl lysine isopeptide (Lys-Gly) (interchain with G-Cter in SUMO2) linkage. Disordered regions lie at residues 274 to 393 (KLAT…KTYL) and 406 to 466 (ESES…FQRK). At Thr-277 the chain carries Phosphothreonine. Over residues 286–296 (KKAEPVKVLQK) the composition is skewed to basic and acidic residues. Position 307 is a phosphoserine (Ser-307). Pro residues predominate over residues 349 to 361 (PSPPPPPSPPLEP). Residues Ser-407 and Ser-409 each carry the phosphoserine modification. The residue at position 411 (Thr-411) is a Phosphothreonine. Ser-413 is subject to Phosphoserine. Basic and acidic residues predominate over residues 432–441 (VKKEPREERK). A Glycyl lysine isopeptide (Lys-Gly) (interchain with G-Cter in SUMO); alternate cross-link involves residue Lys-433. Residue Lys-433 forms a Glycyl lysine isopeptide (Lys-Gly) (interchain with G-Cter in SUMO2); alternate linkage. Over residues 455–466 (RQVSITGFFQRK) the composition is skewed to polar residues. The short motif at 456 to 463 (QVSITGFF) is the PIP-box element. Ser-458 is subject to Phosphoserine.

Component of both the DNA polymerase delta and DNA polymerase zeta complexes. The tetrameric DNA polymerase delta complex (Pol-delta4), which consists of POLD1/p125, POLD2/p50, POLD3/p66/p68 and POLD4/p12, with POLD1 bearing DNA polymerase and 3' to 5' proofreading exonuclease activities. Within this complex, directly interacts with POLD2. Following stress caused by DNA damaging agents or by replication stress, POLD4 is degraded and Pol-delta4 is converted into a trimeric form of the complex (Pol-delta3), which consists of POLD1, POLD2 and POLD3. Pol-delta3 is the major form occurring at S phase replication sites, as well as DNA damage sites. Directly interacts with PCNA, as do POLD1 and POLD4; this interaction stimulates Pol-delta polymerase activity. POLD3 phosphorylation at Ser-458 impairs PCNA binding. Component of the DNA polymerase zeta complex (POLZ), which consists of REV3L, MAD2L2, POLD2 and POLD3, with REV3L bearing DNA polymerase catalytic activity. The DNA polymerase delta complex interacts with POLDIP2; this interaction is probably mediated through direct binding to POLD2. Post-translationally, ubiquitinated, but not targeted to the proteasome. Sumoylated. Sumoylation with SUMO3 may be predominant. Phosphorylation at Ser-458 is catalyzed in vitro by PKA. It is thought to decrease the affinity for PCNA and Pol-delta4 processivity. Can also be phosphorylated in vitro by CDK1-cyclin-A complex, as well as CDK2-cyclin-A and CDK2-cyclin-E complexes. PCNA interferes with CDK-cyclin phosphorylation.

Its subcellular location is the cytoplasm. The protein localises to the nucleus. Its function is as follows. Accessory component of both the DNA polymerase delta complex and the DNA polymerase zeta complex. As a component of the trimeric and tetrameric DNA polymerase delta complexes (Pol-delta3 and Pol-delta4, respectively), plays a role in high fidelity genome replication, including in lagging strand synthesis, and repair. Required for optimal Pol-delta activity. Stabilizes the Pol-delta complex and plays a major role in Pol-delta stimulation by PCNA. Pol-delta3 and Pol-delta4 are characterized by the absence or the presence of POLD4. They exhibit differences in catalytic activity. Most notably, Pol-delta3 shows higher proofreading activity than Pol-delta4. Although both Pol-delta3 and Pol-delta4 process Okazaki fragments in vitro, Pol-delta3 may also be better suited to fulfill this task, exhibiting near-absence of strand displacement activity compared to Pol-delta4 and stalling on encounter with the 5'-blocking oligonucleotides. Pol-delta3 idling process may avoid the formation of a gap, while maintaining a nick that can be readily ligated. Along with DNA polymerase kappa, DNA polymerase delta carries out approximately half of nucleotide excision repair (NER) synthesis following UV irradiation. In this context, POLD3, along with PCNA and RFC1-replication factor C complex, is required to recruit POLD1, the catalytic subunit of the polymerase delta complex, to DNA damage sites. Under conditions of DNA replication stress, required for the repair of broken replication forks through break-induced replication (BIR). Involved in the translesion synthesis (TLS) of templates carrying O6-methylguanine or abasic sites performed by Pol-delta4, independently of DNA polymerase zeta (REV3L) or eta (POLH). Facilitates abasic site bypass by DNA polymerase delta by promoting extension from the nucleotide inserted opposite the lesion. Also involved in TLS, as a component of the tetrameric DNA polymerase zeta complex. Along with POLD2, dramatically increases the efficiency and processivity of DNA synthesis of the DNA polymerase zeta complex compared to the minimal zeta complex, consisting of only REV3L and REV7. This chain is DNA polymerase delta subunit 3 (POLD3), found in Homo sapiens (Human).